Here is a 98-residue protein sequence, read N- to C-terminus: Small ribosomal subunit protein bS6 (98 aa).

The protein belongs to the bacterial ribosomal protein bS6 family.

In terms of biological role, binds together with bS18 to 16S ribosomal RNA. This is Small ribosomal subunit protein bS6 from Lactobacillus johnsonii (strain CNCM I-12250 / La1 / NCC 533).